We begin with the raw amino-acid sequence, 306 residues long: Putative HPr kinase/phosphorylase 2 (306 aa).

Catalysis depends on residues His-138 and Lys-159. 153-160 (GESGVGKS) contributes to the ATP binding site. Position 160 (Ser-160) interacts with Mg(2+). Catalysis depends on Asp-177, which acts as the Proton acceptor; for phosphorylation activity. Proton donor; for dephosphorylation activity. Positions 201 to 210 (LALRSVGLLN) are important for the catalytic mechanism of both phosphorylation and dephosphorylation. Residues 264–269 (QLQPGR) form an important for the catalytic mechanism of dephosphorylation region.

Belongs to the HPrK/P family. In terms of assembly, homohexamer. It depends on Mg(2+) as a cofactor.

It catalyses the reaction [HPr protein]-L-serine + ATP = [HPr protein]-O-phospho-L-serine + ADP + H(+). The catalysed reaction is [HPr protein]-O-phospho-L-serine + phosphate + H(+) = [HPr protein]-L-serine + diphosphate. Its function is as follows. Catalyzes the ATP- as well as the pyrophosphate-dependent phosphorylation of a specific serine residue in HPr, a phosphocarrier protein of the phosphoenolpyruvate-dependent sugar phosphotransferase system (PTS). HprK/P also catalyzes the pyrophosphate-producing, inorganic phosphate-dependent dephosphorylation (phosphorolysis) of seryl-phosphorylated HPr (P-Ser-HPr). The two antagonistic activities of HprK/P are regulated by several intracellular metabolites, which change their concentration in response to the absence or presence of rapidly metabolisable carbon sources (glucose, fructose, etc.) in the growth medium. Also phosphorylates/dephosphorylates the HPr-like catabolite repression protein crh on a specific serine residue. Therefore, by controlling the phosphorylation state of HPr and crh, HPrK/P is a sensor enzyme that plays a major role in the regulation of carbon metabolism and sugar transport: it mediates carbon catabolite repression (CCR), and regulates PTS-catalyzed carbohydrate uptake and inducer exclusion. This Oceanobacillus iheyensis (strain DSM 14371 / CIP 107618 / JCM 11309 / KCTC 3954 / HTE831) protein is Putative HPr kinase/phosphorylase 2 (hprK2).